Reading from the N-terminus, the 186-residue chain is Ribosome-recycling factor (186 aa).

The protein belongs to the RRF family.

It is found in the cytoplasm. Responsible for the release of ribosomes from messenger RNA at the termination of protein biosynthesis. May increase the efficiency of translation by recycling ribosomes from one round of translation to another. The polypeptide is Ribosome-recycling factor (Burkholderia multivorans (strain ATCC 17616 / 249)).